The chain runs to 693 residues: Periplasmic alpha-galactoside-binding protein (693 aa).

Positions 1–20 are cleaved as a signal peptide; it reads MKTHRLNMTASLLIGISAFA.

This sequence belongs to the bacterial solute-binding protein 5 family.

It localises to the periplasm. In terms of biological role, involved in the transport of alpha-galactosides. Required for the utilization of raffinose and melibiose. Probably acts as a periplasmic substrate-binding protein for a transport system. The protein is Periplasmic alpha-galactoside-binding protein of Rhizobium meliloti (strain 1021) (Ensifer meliloti).